The chain runs to 352 residues: Biotin synthase (352 aa).

The Radical SAM core domain occupies asparagine 44–lysine 262. Cysteine 59, cysteine 63, and cysteine 66 together coordinate [4Fe-4S] cluster. The [2Fe-2S] cluster site is built by cysteine 103, cysteine 134, cysteine 194, and arginine 266.

It belongs to the radical SAM superfamily. Biotin synthase family. As to quaternary structure, homodimer. It depends on [4Fe-4S] cluster as a cofactor. The cofactor is [2Fe-2S] cluster.

The catalysed reaction is (4R,5S)-dethiobiotin + (sulfur carrier)-SH + 2 reduced [2Fe-2S]-[ferredoxin] + 2 S-adenosyl-L-methionine = (sulfur carrier)-H + biotin + 2 5'-deoxyadenosine + 2 L-methionine + 2 oxidized [2Fe-2S]-[ferredoxin]. Its pathway is cofactor biosynthesis; biotin biosynthesis; biotin from 7,8-diaminononanoate: step 2/2. In terms of biological role, catalyzes the conversion of dethiobiotin (DTB) to biotin by the insertion of a sulfur atom into dethiobiotin via a radical-based mechanism. The protein is Biotin synthase of Pseudomonas entomophila (strain L48).